Reading from the N-terminus, the 86-residue chain is Small ribosomal subunit protein uS17 (86 aa).

The protein belongs to the universal ribosomal protein uS17 family. As to quaternary structure, part of the 30S ribosomal subunit.

Functionally, one of the primary rRNA binding proteins, it binds specifically to the 5'-end of 16S ribosomal RNA. This chain is Small ribosomal subunit protein uS17, found in Helicobacter acinonychis (strain Sheeba).